A 149-amino-acid polypeptide reads, in one-letter code: Probable flagellum biosynthesis repressor protein FlbT (149 aa).

This sequence belongs to the FlbT family.

Functionally, has a post-transcriptional repressor function in flagellum biogenesis. Associates with the 5'-UTR of fljK mRNA and promotes its degradation. The chain is Probable flagellum biosynthesis repressor protein FlbT from Rhizobium etli (strain CIAT 652).